We begin with the raw amino-acid sequence, 259 residues long: Imidazole glycerol phosphate synthase subunit HisF (259 aa).

Active-site residues include aspartate 11 and aspartate 130.

It belongs to the HisA/HisF family. In terms of assembly, heterodimer of HisH and HisF.

Its subcellular location is the cytoplasm. It catalyses the reaction 5-[(5-phospho-1-deoxy-D-ribulos-1-ylimino)methylamino]-1-(5-phospho-beta-D-ribosyl)imidazole-4-carboxamide + L-glutamine = D-erythro-1-(imidazol-4-yl)glycerol 3-phosphate + 5-amino-1-(5-phospho-beta-D-ribosyl)imidazole-4-carboxamide + L-glutamate + H(+). Its pathway is amino-acid biosynthesis; L-histidine biosynthesis; L-histidine from 5-phospho-alpha-D-ribose 1-diphosphate: step 5/9. Functionally, IGPS catalyzes the conversion of PRFAR and glutamine to IGP, AICAR and glutamate. The HisF subunit catalyzes the cyclization activity that produces IGP and AICAR from PRFAR using the ammonia provided by the HisH subunit. The sequence is that of Imidazole glycerol phosphate synthase subunit HisF from Chloroflexus aurantiacus (strain ATCC 29366 / DSM 635 / J-10-fl).